Consider the following 286-residue polypeptide: Shikimate dehydrogenase (NADP(+)) (286 aa).

Residues 22–24 and Thr69 contribute to the shikimate site; that span reads SFS. Lys73 functions as the Proton acceptor in the catalytic mechanism. Glu85 serves as a coordination point for NADP(+). Shikimate contacts are provided by Asn94 and Asp109. NADP(+) contacts are provided by residues 133 to 137, 157 to 162, and Leu231; these read GAGGA and NRTIDK. A shikimate-binding site is contributed by Tyr233. An NADP(+)-binding site is contributed by Gly254.

It belongs to the shikimate dehydrogenase family. In terms of assembly, homodimer.

The catalysed reaction is shikimate + NADP(+) = 3-dehydroshikimate + NADPH + H(+). It participates in metabolic intermediate biosynthesis; chorismate biosynthesis; chorismate from D-erythrose 4-phosphate and phosphoenolpyruvate: step 4/7. Its function is as follows. Involved in the biosynthesis of the chorismate, which leads to the biosynthesis of aromatic amino acids. Catalyzes the reversible NADPH linked reduction of 3-dehydroshikimate (DHSA) to yield shikimate (SA). This is Shikimate dehydrogenase (NADP(+)) from Alkaliphilus oremlandii (strain OhILAs) (Clostridium oremlandii (strain OhILAs)).